Consider the following 228-residue polypeptide: UPF0758 protein CLK_2387 (228 aa).

Residues 106–228 form the MPN domain; that stretch reads KISTPLDVSN…YVSMKEKGTI (123 aa). His-177, His-179, and Asp-190 together coordinate Zn(2+). A JAMM motif motif is present at residues 177-190; that stretch reads HNHPSGDPTPSKED.

This sequence belongs to the UPF0758 family.

The protein is UPF0758 protein CLK_2387 of Clostridium botulinum (strain Loch Maree / Type A3).